Reading from the N-terminus, the 262-residue chain is Ribosome-recycling factor, mitochondrial (262 aa).

A mitochondrion-targeting transit peptide spans 1-55 (MALGLRCFRLVHPAFCNSLAALTRPVSEVTLQTVRGRQNDHGQCMAYAAVPVRHF).

It belongs to the RRF family.

The protein localises to the mitochondrion. Functionally, responsible for the disassembly of ribosomes from messenger RNA at the termination of mitochondrial protein biosynthesis. Acts in collaboration with GFM2. Promotes mitochondrial ribosome recycling by dissolution of intersubunit contacts. The chain is Ribosome-recycling factor, mitochondrial (MRRF) from Bos taurus (Bovine).